The sequence spans 236 residues: Carbonyl reductase family member 4 (236 aa).

NADP(+)-binding positions include 11–14, 34–35, aspartate 55, and 82–84; these read SRGI, RN, and SAG. Residue serine 134 participates in substrate binding. Residues tyrosine 147, lysine 151, and 180 to 182 each bind NADP(+); that span reads IRT. Tyrosine 147 serves as the catalytic Proton acceptor.

This sequence belongs to the short-chain dehydrogenases/reductases (SDR) family. Homotetramer (in vitro). Heterotetramer with HSD17B8; contains two molecules each of HSD17B8 and CBR4.

The protein resides in the mitochondrion matrix. It functions in the pathway lipid metabolism; fatty acid biosynthesis. The heterotetramer with HSD17B8 has NADH-dependent 3-ketoacyl-acyl carrier protein reductase activity, and thereby plays a role in mitochondrial fatty acid biosynthesis. Within the heterotetramer, HSD17B8 binds NADH; CBR4 binds NADPD. The homotetramer has NADPH-dependent quinone reductase activity. Both homotetramer and the heterotetramer have broad in vitro substrate specificity and can reduce 9,10-phenanthrenequinone, 1,4-benzoquinone and various other o-quinones and p-quinones. The protein is Carbonyl reductase family member 4 (cbr4) of Xenopus laevis (African clawed frog).